A 234-amino-acid chain; its full sequence is Demethylmenaquinone methyltransferase (234 aa).

S-adenosyl-L-methionine contacts are provided by residues Thr58, Asp79, and 106–107 (NA).

Belongs to the class I-like SAM-binding methyltransferase superfamily. MenG/UbiE family.

The catalysed reaction is a 2-demethylmenaquinol + S-adenosyl-L-methionine = a menaquinol + S-adenosyl-L-homocysteine + H(+). The protein operates within quinol/quinone metabolism; menaquinone biosynthesis; menaquinol from 1,4-dihydroxy-2-naphthoate: step 2/2. Its function is as follows. Methyltransferase required for the conversion of demethylmenaquinol (DMKH2) to menaquinol (MKH2). The protein is Demethylmenaquinone methyltransferase of Bacillus pumilus (strain SAFR-032).